Reading from the N-terminus, the 76-residue chain is Antimicrobial peptide Smp24 (76 aa).

The first 22 residues, 1-22 (MQYKTFLVIFMAYLLVTHEAEA), serve as a signal peptide directing secretion. Positions 47-76 (SKRKRDVEDFFDPYQRDLDLELERLLSQLQ) are excised as a propeptide.

Belongs to the non-disulfide-bridged peptide (NDBP) superfamily. Medium-length antimicrobial peptide (group 3) family. Expressed by the venom gland.

It localises to the secreted. The protein localises to the target cell membrane. Functionally, peptide that shows antimicrobial activity, moderate cytolysis on eukaryote cells and interference with DNA synthesis. Has potent activity against Gram-positive bacteria and moderate activity against Gram-negative bacteria, as well as moderate activity against fungi. Acts by inducing bacterial membrane disruption. Uses multiple modes of action depending on the membrane lipid composition. Uses a toroidal pore mechanism against the prokaryotic like membrane and forms hexagonal phase non-lamellar structures in eukaryotic-like membrane. Shows activity against B.subtilis (MIC=4 ug/ml), S.epidermidis (MIC=8 ug/ml), S.aureus (MIC=8 ug/ml), E.coli (MIC=64 ug/ml), K.pneumoniae (MIC=128 ug/ml), P.aeruginosa (MIC=256 ug/ml), and C.albicans (MIC=32 ug/ml). Shows moderate hemolysis activity. The protein is Antimicrobial peptide Smp24 of Scorpio palmatus (Israeli golden scorpion).